A 212-amino-acid polypeptide reads, in one-letter code: Ras-related protein Rab-17 (212 aa).

At serine 29 the chain carries Phosphoserine. Glycine 31, lysine 32, serine 33, and threonine 50 together coordinate GTP. Mg(2+) contacts are provided by serine 33, threonine 50, and aspartate 73. A Switch 1 motif is present at residues 43-54 (DFKSILPTVGCA). The short motif at 75–91 (AGQEKYHSVCHLYFRGA) is the Switch 2 element. GTP is bound by residues glycine 76, asparagine 132, lysine 133, aspartate 135, and alanine 163. Residues cysteine 209 and cysteine 210 are each lipidated (S-geranylgeranyl cysteine).

This sequence belongs to the small GTPase superfamily. Rab family. Mg(2+) serves as cofactor. As to expression, expressed in melanocytes (at protein level).

Its subcellular location is the recycling endosome membrane. It is found in the melanosome. The protein resides in the cell projection. The protein localises to the dendrite. The catalysed reaction is GTP + H2O = GDP + phosphate + H(+). Its activity is regulated as follows. Regulated by guanine nucleotide exchange factors (GEFs) which promote the exchange of bound GDP for free GTP. Regulated by GTPase activating proteins (GAPs) which increase the GTP hydrolysis activity. Inhibited by GDP dissociation inhibitors (GDIs). Functionally, the small GTPases Rab are key regulators of intracellular membrane trafficking, from the formation of transport vesicles to their fusion with membranes. Rabs cycle between an inactive GDP-bound form and an active GTP-bound form that is able to recruit to membranes different set of downstream effectors directly responsible for vesicle formation, movement, tethering and fusion. RAB17 is involved in transcytosis, the directed movement of endocytosed material through the cell and its exocytosis from the plasma membrane at the opposite side. Mainly observed in epithelial cells, transcytosis mediates for instance, the transcellular transport of immunoglobulins from the basolateral surface to the apical surface. Most probably controls membrane trafficking through apical recycling endosomes in a post-endocytic step of transcytosis. Required for melanosome transport and release from melanocytes, it also regulates dendrite and dendritic spine development. May also play a role in cell migration. The chain is Ras-related protein Rab-17 from Homo sapiens (Human).